Here is a 1700-residue protein sequence, read N- to C-terminus: Probable serine/threonine-protein kinase ifkC (1700 aa).

Residues 1–25 (MPPKPKQKAKQPSQQPPPPPPPAAA) form a disordered region. Residues 14–23 (QQPPPPPPPA) are compositionally biased toward pro residues. One can recognise an RWD domain in the interval 74–197 (MELEALQAIF…EIAKDFLNEN (124 aa)). Positions 454-463 (GLKKSPSTFE) are enriched in polar residues. A disordered region spans residues 454-488 (GLKKSPSTFEYSGEGGGGGVGGGSSQKTINPHQQS). Residues 466–477 (GEGGGGGVGGGS) are compositionally biased toward gly residues. Residues 479-488 (QKTINPHQQS) show a composition bias toward polar residues. The Protein kinase domain maps to 494-1027 (FEEIQLLGRG…AQQLLQSELM (534 aa)). ATP is bound by residues 500–508 (LGRGGFGQV) and Lys523. Disordered regions lie at residues 568–639 (LTND…ENND) and 689–760 (GNNT…SSSK). The span at 572 to 639 (NSDDDDDDDD…SEFESEENND (68 aa)) shows a compositional bias: acidic residues. Residues 697–735 (SSNQHLQQQQQQNQSQQQKKQPQQNQSQQQKKLKNSNSK) show a composition bias toward low complexity. The segment covering 736–752 (SKSKSKSKSKSKSKSNS) has biased composition (basic residues). The active-site Proton acceptor is the Asp822. Composition is skewed to low complexity over residues 850 to 875 (TSTL…SSNS), 1135 to 1158 (NNSS…NTNS), 1230 to 1240 (SSNGNSNNNNS), and 1509 to 1531 (NNSN…SYNN). Disordered regions lie at residues 850 to 901 (TSTL…EVEG), 1134 to 1160 (FNNS…NSVV), 1216 to 1253 (KHHH…SNTT), and 1507 to 1531 (NLNN…SYNN).

Belongs to the protein kinase superfamily. Ser/Thr protein kinase family. GCN2 subfamily.

It carries out the reaction L-seryl-[protein] + ATP = O-phospho-L-seryl-[protein] + ADP + H(+). The catalysed reaction is L-threonyl-[protein] + ATP = O-phospho-L-threonyl-[protein] + ADP + H(+). The protein is Probable serine/threonine-protein kinase ifkC (ifkC) of Dictyostelium discoideum (Social amoeba).